A 2894-amino-acid polypeptide reads, in one-letter code: Bifunctional DNA-directed RNA polymerase subunit beta-beta' (2894 aa).

Positions 1-1378 are DNA-directed RNA polymerase subunit beta; it reads MANFTKLKNR…DVNIYGDEQD (1378 aa). The segment at 1385-2894 is DNA-directed RNA polymerase subunit beta'; the sequence is PIAIKEDERP…QEEYEEDEEE (1510 aa). Residues cysteine 1450, cysteine 1452, cysteine 1465, and cysteine 1468 each coordinate Zn(2+). Mg(2+) contacts are provided by aspartate 1849, aspartate 1851, and aspartate 1853. Positions 2179, 2253, 2260, and 2263 each coordinate Zn(2+).

The protein in the N-terminal section; belongs to the RNA polymerase beta chain family. It in the C-terminal section; belongs to the RNA polymerase beta' chain family. In terms of assembly, the RNAP catalytic core consists of 2 alpha, 1 beta/beta' and 1 omega subunit. When a sigma factor is associated with the core the holoenzyme is formed, which can initiate transcription. Requires Mg(2+) as cofactor. It depends on Zn(2+) as a cofactor.

It catalyses the reaction RNA(n) + a ribonucleoside 5'-triphosphate = RNA(n+1) + diphosphate. DNA-dependent RNA polymerase catalyzes the transcription of DNA into RNA using the four ribonucleoside triphosphates as substrates. The chain is Bifunctional DNA-directed RNA polymerase subunit beta-beta' (rpoBC) from Helicobacter hepaticus (strain ATCC 51449 / 3B1).